The chain runs to 288 residues: Protein shisa-2 (288 aa).

The first 23 residues, 1–23 (MWLEGSPLAVLAAVSFLLSVLAA), serve as a signal peptide directing secretion. The Extracellular portion of the chain corresponds to 24 to 110 (AQGSGEYCHG…DSTAVPIYVP (87 aa)). The chain crosses the membrane as a helical span at residues 111-131 (FLIVGSVFVAFIIVGSLVAIC). The Cytoplasmic segment spans residues 132–288 (CCRCLRPKQE…EQMMYPAVTV (157 aa)). The segment covering 161–188 (SSASTSRGSSSRQSSTAASSSSSANSGA) has biased composition (low complexity). The disordered stretch occupies residues 161–198 (SSASTSRGSSSRQSSTAASSSSSANSGARPPPTRSQTN).

Belongs to the shisa family. Interacts with fzd8 and fgfr1.

It localises to the endoplasmic reticulum membrane. Functionally, plays an essential role in the maturation of presomitic mesoderm cells by individual attenuation of both fgf and wnt signaling. Inhibits both wnt and fgf signaling through the regulation of protein maturation and cell surface transportation of their receptors within the endoplasmic reticulum. This chain is Protein shisa-2 (shisa2), found in Xenopus laevis (African clawed frog).